Here is a 179-residue protein sequence, read N- to C-terminus: Ferric nitrobindin-like protein (179 aa).

The GXWXGXG motif lies at 17-23 (GRWEGLG).

This sequence belongs to the nitrobindin family.

This is Ferric nitrobindin-like protein from Thermobifida fusca (strain YX).